We begin with the raw amino-acid sequence, 155 residues long: Superoxide dismutase [Cu-Zn] (155 aa).

Residues His47, His49, and His64 each contribute to the Cu cation site. Cysteines 58 and 147 form a disulfide. The Zn(2+) site is built by His64, His72, His81, and Asp84. His121 is a Cu cation binding site. Arg144 provides a ligand contact to substrate.

It belongs to the Cu-Zn superoxide dismutase family. Homodimer. Requires Cu cation as cofactor. Zn(2+) is required as a cofactor.

The protein localises to the cytoplasm. The catalysed reaction is 2 superoxide + 2 H(+) = H2O2 + O2. Functionally, destroys radicals which are normally produced within the cells and which are toxic to biological systems. The protein is Superoxide dismutase [Cu-Zn] (SOD1) of Kluyveromyces lactis (strain ATCC 8585 / CBS 2359 / DSM 70799 / NBRC 1267 / NRRL Y-1140 / WM37) (Yeast).